Here is a 654-residue protein sequence, read N- to C-terminus: Fructose-1,6-bisphosphatase class 3 (654 aa).

The tract at residues 288-307 is disordered; it reads NPAFKPKKRPDKHERLTQRE. The span at 298–307 shows a compositional bias: basic and acidic residues; that stretch reads DKHERLTQRE.

This sequence belongs to the FBPase class 3 family. Mn(2+) is required as a cofactor.

It catalyses the reaction beta-D-fructose 1,6-bisphosphate + H2O = beta-D-fructose 6-phosphate + phosphate. Its pathway is carbohydrate biosynthesis; gluconeogenesis. The polypeptide is Fructose-1,6-bisphosphatase class 3 (Staphylococcus aureus (strain MSSA476)).